The sequence spans 161 residues: Nucleotide-binding protein lpg1167 (161 aa).

Belongs to the YajQ family.

In terms of biological role, nucleotide-binding protein. The polypeptide is Nucleotide-binding protein lpg1167 (Legionella pneumophila subsp. pneumophila (strain Philadelphia 1 / ATCC 33152 / DSM 7513)).